Reading from the N-terminus, the 250-residue chain is 5'-nucleotidase SurE (250 aa).

Residues Asp8, Asp9, Ser40, and Asn94 each contribute to the a divalent metal cation site.

It belongs to the SurE nucleotidase family. A divalent metal cation is required as a cofactor.

It localises to the cytoplasm. The catalysed reaction is a ribonucleoside 5'-phosphate + H2O = a ribonucleoside + phosphate. Functionally, nucleotidase that shows phosphatase activity on nucleoside 5'-monophosphates. The chain is 5'-nucleotidase SurE from Wolbachia sp. subsp. Drosophila simulans (strain wRi).